The primary structure comprises 211 residues: Large ribosomal subunit protein uL4 (211 aa).

A disordered region spans residues 44–90; it reads ERQGTHSTLTKGEVRGGGKKPWRQKHTGKARTGSTRNPHWTGGGVVF. A compositionally biased stretch (basic residues) spans 60-72; the sequence is GGKKPWRQKHTGK.

It belongs to the universal ribosomal protein uL4 family. As to quaternary structure, part of the 50S ribosomal subunit.

Functionally, one of the primary rRNA binding proteins, this protein initially binds near the 5'-end of the 23S rRNA. It is important during the early stages of 50S assembly. It makes multiple contacts with different domains of the 23S rRNA in the assembled 50S subunit and ribosome. Forms part of the polypeptide exit tunnel. This Ureaplasma urealyticum serovar 10 (strain ATCC 33699 / Western) protein is Large ribosomal subunit protein uL4.